A 346-amino-acid polypeptide reads, in one-letter code: tRNA N6-adenosine threonylcarbamoyltransferase (346 aa).

2 residues coordinate Fe cation: histidine 111 and histidine 115. Residues 134–138 (LVSGG), aspartate 167, glycine 180, and asparagine 279 each bind substrate. Aspartate 307 provides a ligand contact to Fe cation.

Belongs to the KAE1 / TsaD family. Fe(2+) serves as cofactor.

It is found in the cytoplasm. It carries out the reaction L-threonylcarbamoyladenylate + adenosine(37) in tRNA = N(6)-L-threonylcarbamoyladenosine(37) in tRNA + AMP + H(+). Functionally, required for the formation of a threonylcarbamoyl group on adenosine at position 37 (t(6)A37) in tRNAs that read codons beginning with adenine. Is involved in the transfer of the threonylcarbamoyl moiety of threonylcarbamoyl-AMP (TC-AMP) to the N6 group of A37, together with TsaE and TsaB. TsaD likely plays a direct catalytic role in this reaction. In Burkholderia thailandensis (strain ATCC 700388 / DSM 13276 / CCUG 48851 / CIP 106301 / E264), this protein is tRNA N6-adenosine threonylcarbamoyltransferase.